A 419-amino-acid chain; its full sequence is Argininosuccinate synthase (419 aa).

ATP contacts are provided by residues 9-17 (AYSGGLDTS) and Ala35. L-citrulline-binding residues include Tyr86 and Ser91. 114–122 (AHGATGKGN) provides a ligand contact to ATP. Thr118, Asn122, and Asp123 together coordinate L-aspartate. Asn122 serves as a coordination point for L-citrulline. 5 residues coordinate L-citrulline: Arg126, Ser179, Ser188, Glu270, and Tyr282.

Belongs to the argininosuccinate synthase family. Type 1 subfamily. In terms of assembly, homotetramer.

It carries out the reaction L-citrulline + L-aspartate + ATP = 2-(N(omega)-L-arginino)succinate + AMP + diphosphate + H(+). The protein operates within amino-acid biosynthesis; L-arginine biosynthesis; L-arginine from L-ornithine and carbamoyl phosphate: step 2/3. It participates in nitrogen metabolism; urea cycle; (N(omega)-L-arginino)succinate from L-aspartate and L-citrulline: step 1/1. The protein is Argininosuccinate synthase of Drosophila melanogaster (Fruit fly).